The sequence spans 193 residues: Xanthine phosphoribosyltransferase (193 aa).

Xanthine is bound by residues Leu20 and Thr27. Residue 128-132 coordinates 5-phospho-alpha-D-ribose 1-diphosphate; sequence ANGQA. Lys156 contributes to the xanthine binding site.

It belongs to the purine/pyrimidine phosphoribosyltransferase family. Xpt subfamily. Homodimer.

The protein localises to the cytoplasm. It carries out the reaction XMP + diphosphate = xanthine + 5-phospho-alpha-D-ribose 1-diphosphate. It participates in purine metabolism; XMP biosynthesis via salvage pathway; XMP from xanthine: step 1/1. In terms of biological role, converts the preformed base xanthine, a product of nucleic acid breakdown, to xanthosine 5'-monophosphate (XMP), so it can be reused for RNA or DNA synthesis. The protein is Xanthine phosphoribosyltransferase of Streptococcus pneumoniae (strain CGSP14).